Here is a 189-residue protein sequence, read N- to C-terminus: Peptidyl-tRNA hydrolase (189 aa).

Tyr-14 provides a ligand contact to tRNA. The active-site Proton acceptor is the His-19. Residues Tyr-64, Asn-66, and Asn-112 each coordinate tRNA.

This sequence belongs to the PTH family. In terms of assembly, monomer.

It is found in the cytoplasm. The enzyme catalyses an N-acyl-L-alpha-aminoacyl-tRNA + H2O = an N-acyl-L-amino acid + a tRNA + H(+). Functionally, hydrolyzes ribosome-free peptidyl-tRNAs (with 1 or more amino acids incorporated), which drop off the ribosome during protein synthesis, or as a result of ribosome stalling. In terms of biological role, catalyzes the release of premature peptidyl moieties from peptidyl-tRNA molecules trapped in stalled 50S ribosomal subunits, and thus maintains levels of free tRNAs and 50S ribosomes. This chain is Peptidyl-tRNA hydrolase, found in Clostridium botulinum (strain Kyoto / Type A2).